A 548-amino-acid chain; its full sequence is Dihydroxy-acid dehydratase (548 aa).

A Mg(2+)-binding site is contributed by Asp-78. Cys-119 is a [2Fe-2S] cluster binding site. Mg(2+) is bound by residues Asp-120 and Lys-121. The residue at position 121 (Lys-121) is an N6-carboxylysine. Cys-185 is a binding site for [2Fe-2S] cluster. Residue Glu-438 participates in Mg(2+) binding. The Proton acceptor role is filled by Ser-464.

The protein belongs to the IlvD/Edd family. In terms of assembly, homodimer. The cofactor is [2Fe-2S] cluster. Requires Mg(2+) as cofactor.

It catalyses the reaction (2R)-2,3-dihydroxy-3-methylbutanoate = 3-methyl-2-oxobutanoate + H2O. The catalysed reaction is (2R,3R)-2,3-dihydroxy-3-methylpentanoate = (S)-3-methyl-2-oxopentanoate + H2O. It functions in the pathway amino-acid biosynthesis; L-isoleucine biosynthesis; L-isoleucine from 2-oxobutanoate: step 3/4. The protein operates within amino-acid biosynthesis; L-valine biosynthesis; L-valine from pyruvate: step 3/4. Functionally, functions in the biosynthesis of branched-chain amino acids. Catalyzes the dehydration of (2R,3R)-2,3-dihydroxy-3-methylpentanoate (2,3-dihydroxy-3-methylvalerate) into 2-oxo-3-methylpentanoate (2-oxo-3-methylvalerate) and of (2R)-2,3-dihydroxy-3-methylbutanoate (2,3-dihydroxyisovalerate) into 2-oxo-3-methylbutanoate (2-oxoisovalerate), the penultimate precursor to L-isoleucine and L-valine, respectively. The sequence is that of Dihydroxy-acid dehydratase from Methanothrix thermoacetophila (strain DSM 6194 / JCM 14653 / NBRC 101360 / PT) (Methanosaeta thermophila).